The following is a 907-amino-acid chain: Protein translocase subunit SecA (907 aa).

Residues Gln87, 105 to 109, and Asp513 contribute to the ATP site; that span reads GEGKT. Residues 841 to 853 show a composition bias toward basic and acidic residues; sequence EAQRRAQAEEAAR. A disordered region spans residues 841–907; that stretch reads EAQRRAQAEE…KYKQCHGQIN (67 aa). Low complexity predominate over residues 854–865; it reads RAQAQHASAQSQ. Over residues 872–887 the composition is skewed to basic and acidic residues; sequence EGHHQPVVRDERKVGR. Cys891, Cys893, Cys902, and His903 together coordinate Zn(2+).

This sequence belongs to the SecA family. In terms of assembly, monomer and homodimer. Part of the essential Sec protein translocation apparatus which comprises SecA, SecYEG and auxiliary proteins SecDF-YajC and YidC. It depends on Zn(2+) as a cofactor.

Its subcellular location is the cell inner membrane. The protein localises to the cytoplasm. It catalyses the reaction ATP + H2O + cellular proteinSide 1 = ADP + phosphate + cellular proteinSide 2.. Its function is as follows. Part of the Sec protein translocase complex. Interacts with the SecYEG preprotein conducting channel. Has a central role in coupling the hydrolysis of ATP to the transfer of proteins into and across the cell membrane, serving both as a receptor for the preprotein-SecB complex and as an ATP-driven molecular motor driving the stepwise translocation of polypeptide chains across the membrane. The chain is Protein translocase subunit SecA from Vibrio vulnificus (strain CMCP6).